A 315-amino-acid chain; its full sequence is Porphobilinogen deaminase (315 aa).

S-(dipyrrolylmethanemethyl)cysteine is present on C238.

This sequence belongs to the HMBS family. As to quaternary structure, monomer. The cofactor is dipyrromethane.

The catalysed reaction is 4 porphobilinogen + H2O = hydroxymethylbilane + 4 NH4(+). The protein operates within porphyrin-containing compound metabolism; protoporphyrin-IX biosynthesis; coproporphyrinogen-III from 5-aminolevulinate: step 2/4. In terms of biological role, tetrapolymerization of the monopyrrole PBG into the hydroxymethylbilane pre-uroporphyrinogen in several discrete steps. The chain is Porphobilinogen deaminase from Albidiferax ferrireducens (strain ATCC BAA-621 / DSM 15236 / T118) (Rhodoferax ferrireducens).